Here is a 123-residue protein sequence, read N- to C-terminus: Large ribosomal subunit protein uL29 (123 aa).

Residue lysine 19 is modified to N6-acetyllysine. Residue lysine 25 forms a Glycyl lysine isopeptide (Lys-Gly) (interchain with G-Cter in SUMO2) linkage. Position 29 is a phosphoserine (serine 29). Lysine 43 carries the N6-acetyllysine modification.

It belongs to the universal ribosomal protein uL29 family. Component of the large ribosomal subunit.

It is found in the cytoplasm. Component of the large ribosomal subunit. The ribosome is a large ribonucleoprotein complex responsible for the synthesis of proteins in the cell. This is Large ribosomal subunit protein uL29 (RPL35) from Sus scrofa (Pig).